Reading from the N-terminus, the 248-residue chain is Indole-3-glycerol phosphate synthase (248 aa).

The protein belongs to the TrpC family.

The enzyme catalyses 1-(2-carboxyphenylamino)-1-deoxy-D-ribulose 5-phosphate + H(+) = (1S,2R)-1-C-(indol-3-yl)glycerol 3-phosphate + CO2 + H2O. Its pathway is amino-acid biosynthesis; L-tryptophan biosynthesis; L-tryptophan from chorismate: step 4/5. The sequence is that of Indole-3-glycerol phosphate synthase from Sulfolobus acidocaldarius (strain ATCC 33909 / DSM 639 / JCM 8929 / NBRC 15157 / NCIMB 11770).